The sequence spans 416 residues: MGRFILKCLKCGREYSQEYRLTCENDDSFLRAEYLEKKLELRKQPGIGRFHSWLPVQEELTTEAGPITYKSEALARELGLSNLYIGFSGYWPEKGAFIKTCSFKELEAHPTMQLLKESGGKAIVLASAGNTGRAFAHVSALTGTDVYIVVPDSGIPKLWLPEEPTDSIHLISMTPGNDYTDAINLAGRIAKLPGMVPEGGARNVARREGMGTVMLDAAVTIGKMPDHYFQAVGSGTGGISAWEASLRLREDGRFGSKLPKLQLTQNLPFVPMYNAWQEGRRDIIPEIDMKDAKKRIEETYATVLTNRAPPYSVTGGLYDALVDTDGIMYAVSKEEALDAKALFESLEGIDILPPSAVAAASLLKAVEAGNVGKDDTILLNIAGGGFKRLKEDFTLFQIEPEITVSNPDVPLEELKL.

Lys-104 carries the post-translational modification N6-(pyridoxal phosphate)lysine. Pyridoxal 5'-phosphate is bound at residue Asn-130.

It belongs to the threonine synthase family. Cysteate synthase subfamily. In terms of assembly, homotrimer. It depends on pyridoxal 5'-phosphate as a cofactor.

The catalysed reaction is O-phospho-L-serine + sulfite + H(+) = L-cysteate + phosphate. It participates in cofactor biosynthesis; coenzyme M biosynthesis. Its activity is regulated as follows. Is inhibited by AP3 (DL-2-amino-3-phosphonopropionate) and, to a lesser extent, by L-aspartate or AP4 (DL-2-amino-4-phosphonobutyrate). Is also inhibited by EDTA in vitro. Functionally, specifically catalyzes the beta-elimination of phosphate from L-phosphoserine and the beta-addition of sulfite to the dehydroalanine intermediate to produce L-cysteate. Does not display threonine synthase activity like the paralog protein ThrC. The chain is Cysteate synthase from Methanosarcina acetivorans (strain ATCC 35395 / DSM 2834 / JCM 12185 / C2A).